A 70-amino-acid chain; its full sequence is uncharacterized protein (70 aa).

The chain crosses the membrane as a helical span at residues 14-34 (CLVVWFACVYSLLILVVLLLI).

It is found in the virion membrane. This is an uncharacterized protein from Homo sapiens (Human).